Here is a 99-residue protein sequence, read N- to C-terminus: Large ribosomal subunit protein uL23 (99 aa).

Belongs to the universal ribosomal protein uL23 family. In terms of assembly, part of the 50S ribosomal subunit. Contacts protein L29, and trigger factor when it is bound to the ribosome.

In terms of biological role, one of the early assembly proteins it binds 23S rRNA. One of the proteins that surrounds the polypeptide exit tunnel on the outside of the ribosome. Forms the main docking site for trigger factor binding to the ribosome. The chain is Large ribosomal subunit protein uL23 from Rhodopseudomonas palustris (strain BisB18).